Consider the following 153-residue polypeptide: MGLTSQLLPPLFFLLACAGNFAHGHNCHIALREIIETLNSLTEQKTLCTKLTITDILAASKNTTEKETFCRAATVLRQFYSHHEKDTRCLGASAQQFHRHKQLIRFLKRLDRNLWGLAGLNSCPVKEASQSTLEDFLERLKTIMREKYSKCSS.

Positions 1–24 (MGLTSQLLPPLFFLLACAGNFAHG) are cleaved as a signal peptide. 3 cysteine pairs are disulfide-bonded: cysteine 27–cysteine 151, cysteine 48–cysteine 89, and cysteine 70–cysteine 123. N-linked (GlcNAc...) asparagine glycosylation occurs at asparagine 62.

It belongs to the IL-4/IL-13 family.

Its subcellular location is the secreted. Participates in at least several B-cell activation processes as well as of other cell types. It is a costimulator of DNA-synthesis. It induces the expression of class II MHC molecules on resting B-cells. It enhances both secretion and cell surface expression of IgE and IgG1. It also regulates the expression of the low affinity Fc receptor for IgE (CD23) on both lymphocytes and monocytes. Positively regulates IL31RA expression in macrophages. Stimulates autophagy in dendritic cells by interfering with mTORC1 signaling and through the induction of RUFY4. This is Interleukin-4 (IL4) from Cercocebus atys (Sooty mangabey).